Here is a 446-residue protein sequence, read N- to C-terminus: Sensor-type histidine kinase PrrB (446 aa).

2 helical membrane-spanning segments follow: residues 19-39 (VVAT…VVWV) and 151-171 (LLIC…LAAF). In terms of domain architecture, HAMP spans 172 to 222 (AVRPFKQLAQQTRSVDAGGEAPRVEVHGATEAVEIAEAMRGMLQRIWNEQN). Positions 237–446 (VSSHELRTPL…RLLLRISAPS (210 aa)) constitute a Histidine kinase domain. Position 240 is a phosphohistidine; by autocatalysis (histidine 240).

In terms of processing, autophosphorylated.

The protein resides in the cell membrane. The enzyme catalyses ATP + protein L-histidine = ADP + protein N-phospho-L-histidine.. Its function is as follows. Member of the two-component regulatory system PrrB/PrrA that is involved specifically in early intracellular multiplication of Mycobacterium and is essential for its viability. Functions as a sensor protein kinase which is autophosphorylated at a histidine residue and transfers its phosphate group to the conserved aspartic acid residue in the regulatory domain of PrrA. In turn, PrrA binds to the upstream promoter regions of target genes including itself to positively regulate their expression. The polypeptide is Sensor-type histidine kinase PrrB (prrB) (Mycobacterium leprae (strain TN)).